A 147-amino-acid polypeptide reads, in one-letter code: Interleukin-4 (147 aa).

Residues 1 to 19 form the signal peptide; that stretch reads MGLRPQLAAILLCLLACTG. 4 N-linked (GlcNAc...) asparagine glycosylation sites follow: Asn20, Asn61, Asn90, and Asn117. 2 disulfide bridges follow: Cys47/Cys87 and Cys69/Cys114.

Belongs to the IL-4/IL-13 family.

It is found in the secreted. Its function is as follows. Participates in at least several B-cell activation processes as well as of other cell types. It is a costimulator of DNA-synthesis. It induces the expression of class II MHC molecules on resting B-cells. It enhances both secretion and cell surface expression of IgE and IgG1. It also regulates the expression of the low affinity Fc receptor for IgE (CD23) on both lymphocytes and monocytes. Positively regulates IL31RA expression in macrophages. Stimulates autophagy in dendritic cells by interfering with mTORC1 signaling and through the induction of RUFY4. In Mesocricetus auratus (Golden hamster), this protein is Interleukin-4 (IL4).